Here is a 276-residue protein sequence, read N- to C-terminus: uncharacterized protein (276 aa).

The next 10 membrane-spanning stretches (helical) occupy residues 5 to 25 (IVLALTVTFWGLAFTAIKYSV), 31 to 51 (IAIASLRFAIANTLFAVIIIL), 63 to 83 (VFALGIFGVSVYHVFLNLGEV), 89 to 109 (VASVVISLAPIFVLILSAIFL), 119 to 139 (VGIIIAFLGVVVISEPSYANI), 142 to 162 (IALVMVSTVAAAIYTTFGKSL), 168 to 188 (PITLTSNAMVLGSIPLYPFLP), 200 to 220 (LIGSIVFLGIFSTFFGYLGWY), 231 to 251 (ASVFLLAIPVVSLLAGNILLA), and 253 to 273 (PLTLRTVAGSGLVLLGIYIVV). EamA domains are found at residues 12–133 (TFWG…VISE) and 150–274 (VAAA…IVVR).

The protein belongs to the EamA transporter family.

The protein resides in the cell membrane. This is an uncharacterized protein from Archaeoglobus fulgidus (strain ATCC 49558 / DSM 4304 / JCM 9628 / NBRC 100126 / VC-16).